The following is a 56-amino-acid chain: Small integral membrane protein 39 (56 aa).

A helical transmembrane segment spans residues 33-53; that stretch reads VVVSAVLALLVLINVVLIFLL.

It localises to the membrane. In Homo sapiens (Human), this protein is Small integral membrane protein 39.